We begin with the raw amino-acid sequence, 281 residues long: 32 kDa heat shock protein (281 aa).

Over residues 142–168 the composition is skewed to acidic residues; the sequence is EDDEEIDSDEEFGDSDQDEEDSDDEEI. Residues 142 to 281 form a disordered region; the sequence is EDDEEIDSDE…NENNKKKQKN (140 aa). The segment covering 180-209 has biased composition (basic and acidic residues); the sequence is KITEISEVPESKKEKTPEPKKVPEPKKEQV. Residues 210–273 show a composition bias toward low complexity; it reads KQPTQPQQKK…NNKRPQNQNE (64 aa).

In Dictyostelium discoideum (Social amoeba), this protein is 32 kDa heat shock protein (hspC).